The primary structure comprises 124 residues: Small ribosomal subunit protein uS12 (124 aa).

Positions 1–27 (MPTINQLIRKPRKSQTEKTASPALQNC) are disordered. Residues 17-27 (EKTASPALQNC) are compositionally biased toward polar residues. Aspartate 89 is subject to 3-methylthioaspartic acid.

The protein belongs to the universal ribosomal protein uS12 family. In terms of assembly, part of the 30S ribosomal subunit. Contacts proteins S8 and S17. May interact with IF1 in the 30S initiation complex.

Functionally, with S4 and S5 plays an important role in translational accuracy. Its function is as follows. Interacts with and stabilizes bases of the 16S rRNA that are involved in tRNA selection in the A site and with the mRNA backbone. Located at the interface of the 30S and 50S subunits, it traverses the body of the 30S subunit contacting proteins on the other side and probably holding the rRNA structure together. The combined cluster of proteins S8, S12 and S17 appears to hold together the shoulder and platform of the 30S subunit. The chain is Small ribosomal subunit protein uS12 from Borreliella afzelii (strain PKo) (Borrelia afzelii).